We begin with the raw amino-acid sequence, 60 residues long: Potassium channel toxin Tst-beta-KTx (60 aa).

A BetaSPN-type CS-alpha/beta domain is found at 26-60; that stretch reads QFGCPAYEGYCNDHCNDIERKDGECHGFKCKCAKD. Intrachain disulfides connect cysteine 29–cysteine 50, cysteine 36–cysteine 55, and cysteine 40–cysteine 57.

Belongs to the long chain scorpion toxin family. Class 1 subfamily. Expressed by the venom gland.

It is found in the secreted. In terms of biological role, inhibits voltage-gated potassium channels Kv1.1/KCNA1, Kv1.2/KCNA2, and Kv1.3/KCNA3. Its function is as follows. Does not induce hemolytic activity, lactate dehydrogenase (LDH) release from mast cells, mast cell degranulation, and antimicrobial effects. In vivo, injection into mice causes moderate edema formation, but induces very weak or no change in nociceptive sensibility. It also reduces mice locomotion, suggesting an increase in anxiety, but causes no alteration in rearing (standing on hind limbs). This is Potassium channel toxin Tst-beta-KTx from Tityus stigmurus (Brazilian scorpion).